The primary structure comprises 464 residues: Probable acid phosphatase DDB_G0284753 (464 aa).

A disordered region spans residues 1-29; that stretch reads MFSYFRKSQQKVEENQNGGGGDGRGSGIK. The segment covering 17–26 has biased composition (gly residues); it reads NGGGGDGRGS. His-81 functions as the Nucleophile in the catalytic mechanism. The disordered stretch occupies residues 180-202; sequence SFTDEQEKSPHHSSFLVKPDNEE. Asp-347 acts as the Proton donor in catalysis.

This sequence belongs to the histidine acid phosphatase family.

It catalyses the reaction a phosphate monoester + H2O = an alcohol + phosphate. This is Probable acid phosphatase DDB_G0284753 from Dictyostelium discoideum (Social amoeba).